A 250-amino-acid chain; its full sequence is Phosphoribosylaminoimidazole-succinocarboxamide synthase (250 aa).

The protein belongs to the SAICAR synthetase family.

It catalyses the reaction 5-amino-1-(5-phospho-D-ribosyl)imidazole-4-carboxylate + L-aspartate + ATP = (2S)-2-[5-amino-1-(5-phospho-beta-D-ribosyl)imidazole-4-carboxamido]succinate + ADP + phosphate + 2 H(+). The protein operates within purine metabolism; IMP biosynthesis via de novo pathway; 5-amino-1-(5-phospho-D-ribosyl)imidazole-4-carboxamide from 5-amino-1-(5-phospho-D-ribosyl)imidazole-4-carboxylate: step 1/2. The sequence is that of Phosphoribosylaminoimidazole-succinocarboxamide synthase from Parasynechococcus marenigrum (strain WH8102).